Reading from the N-terminus, the 309-residue chain is Protein FdhE (309 aa).

It belongs to the FdhE family.

It localises to the cytoplasm. In terms of biological role, necessary for formate dehydrogenase activity. This Escherichia coli O45:K1 (strain S88 / ExPEC) protein is Protein FdhE.